We begin with the raw amino-acid sequence, 855 residues long: Oxysterol-binding protein-related protein 3 (855 aa).

Residues 1 to 32 are disordered; it reads MSDEKNLGVSQKLVSPSRSTSSCSSKQGSRQD. Phosphoserine is present on residues Ser15 and Ser33. Positions 15 to 31 are enriched in low complexity; it reads SPSRSTSSCSSKQGSRQ. One can recognise a PH domain in the interval 50–145; that stretch reads PPVQKGFLLK…WVSKLRHHRM (96 aa). The short motif at 161-167 is the FFAT 1 element; that stretch reads FFSGSSV. Phosphoserine occurs at positions 199, 250, 272, 277, 288, 291, 340, 393, 405, and 408. The interval 274 to 293 is disordered; the sequence is PNLSTLDFGEEKSYSDGSEA. Residues 377 to 396 form a disordered region; sequence DPPAVPKPGDNLAEENSRDE. Residues 450–454 carry the FFAT 2 motif; it reads LSLDN. The segment at 468–490 is disordered; it reads PVLESSGEARSKRRTSLPAPGPN.

Belongs to the OSBP family. Homodimer. Interacts with RRAS. Interacts (phosphorylated form) with VAPA. Interacts with OSBPL6. Phosphorylation is enhanced in vitro by phorbol-12-myristate-13-acetate (PMA), forskolin and calcium ionophore A23187. Phosphorylation seems to be stimulated in conditions of low cell-cell (or cell-matrix) adhesion. In terms of tissue distribution, expressed in spinal ganglia. Expressed in a subset of small lymphocytes (at protein level).

The protein resides in the endoplasmic reticulum membrane. It localises to the cytoplasm. Its subcellular location is the cytosol. The protein localises to the cell membrane. It is found in the cell projection. The protein resides in the filopodium tip. It localises to the nucleus membrane. In terms of biological role, phosphoinositide-binding protein which associates with both cell and endoplasmic reticulum (ER) membranes. Can bind to the ER membrane protein VAPA and recruit VAPA to plasma membrane sites, thus linking these intracellular compartments. The ORP3-VAPA complex stimulates RRAS signaling which in turn attenuates integrin beta-1 (ITGB1) activation at the cell surface. With VAPA, may regulate ER morphology. Has a role in regulation of the actin cytoskeleton, cell polarity and cell adhesion. Binds to phosphoinositides with preference for PI(3,4)P2 and PI(3,4,5)P3. Also binds 25-hydroxycholesterol and cholesterol. In Mus musculus (Mouse), this protein is Oxysterol-binding protein-related protein 3 (Osbpl3).